The sequence spans 503 residues: Glycerol kinase (503 aa).

ADP is bound at residue T14. ATP contacts are provided by T14, T15, and S16. T14 lines the sn-glycerol 3-phosphate pocket. ADP is bound at residue R18. Residues R84, E85, Y136, and D246 each contribute to the sn-glycerol 3-phosphate site. Positions 84, 85, 136, 246, and 247 each coordinate glycerol. Residues T268 and G311 each contribute to the ADP site. Residues T268, G311, Q315, and G412 each contribute to the ATP site. G412 and N416 together coordinate ADP. Residues 468 to 481 are compositionally biased toward basic and acidic residues; sequence ERTFSPDSDNEKRE. Residues 468–489 are disordered; sequence ERTFSPDSDNEKRERRYKGWKK.

It belongs to the FGGY kinase family.

It catalyses the reaction glycerol + ATP = sn-glycerol 3-phosphate + ADP + H(+). It participates in polyol metabolism; glycerol degradation via glycerol kinase pathway; sn-glycerol 3-phosphate from glycerol: step 1/1. Its activity is regulated as follows. Inhibited by fructose 1,6-bisphosphate (FBP). Functionally, key enzyme in the regulation of glycerol uptake and metabolism. Catalyzes the phosphorylation of glycerol to yield sn-glycerol 3-phosphate. The polypeptide is Glycerol kinase (Haemophilus influenzae (strain ATCC 51907 / DSM 11121 / KW20 / Rd)).